The following is a 417-amino-acid chain: Serine hydroxymethyltransferase (417 aa).

Residues L121 and 125–127 each bind (6S)-5,6,7,8-tetrahydrofolate; that span reads GHL. An N6-(pyridoxal phosphate)lysine modification is found at K229. Position 355–357 (355–357) interacts with (6S)-5,6,7,8-tetrahydrofolate; that stretch reads SPF.

The protein belongs to the SHMT family. As to quaternary structure, homodimer. The cofactor is pyridoxal 5'-phosphate.

The protein resides in the cytoplasm. It carries out the reaction (6R)-5,10-methylene-5,6,7,8-tetrahydrofolate + glycine + H2O = (6S)-5,6,7,8-tetrahydrofolate + L-serine. The protein operates within one-carbon metabolism; tetrahydrofolate interconversion. It functions in the pathway amino-acid biosynthesis; glycine biosynthesis; glycine from L-serine: step 1/1. Its function is as follows. Catalyzes the reversible interconversion of serine and glycine with tetrahydrofolate (THF) serving as the one-carbon carrier. This reaction serves as the major source of one-carbon groups required for the biosynthesis of purines, thymidylate, methionine, and other important biomolecules. Also exhibits THF-independent aldolase activity toward beta-hydroxyamino acids, producing glycine and aldehydes, via a retro-aldol mechanism. This is Serine hydroxymethyltransferase from Yersinia pestis bv. Antiqua (strain Antiqua).